Reading from the N-terminus, the 182-residue chain is LIM domain-containing protein C (182 aa).

2 LIM zinc-binding domains span residues 3-63 (SICP…LFRQ) and 110-170 (TNCP…KFGP).

It is found in the cell projection. It localises to the pseudopodium. The protein localises to the cytoplasm. The protein resides in the cell cortex. Its subcellular location is the cytoskeleton. In terms of biological role, binds to F-actin and may modulate the chemotactic response during early development and contribute to the maintenance of the strength of the actin cytoskeleton. This chain is LIM domain-containing protein C (limC), found in Dictyostelium discoideum (Social amoeba).